Reading from the N-terminus, the 171-residue chain is Transcription antitermination protein NusB (171 aa).

This sequence belongs to the NusB family.

Functionally, involved in transcription antitermination. Required for transcription of ribosomal RNA (rRNA) genes. Binds specifically to the boxA antiterminator sequence of the ribosomal RNA (rrn) operons. This chain is Transcription antitermination protein NusB, found in Brucella ovis (strain ATCC 25840 / 63/290 / NCTC 10512).